A 398-amino-acid chain; its full sequence is Succinate--CoA ligase [ADP-forming] subunit beta (398 aa).

The ATP-grasp domain maps to 9 to 254 (KRLLHEYGAP…TSEEDPKEIE (246 aa)). ATP is bound by residues lysine 46, 53 to 55 (GRG), glutamate 109, alanine 112, and glutamate 117. Residues asparagine 209 and aspartate 223 each contribute to the Mg(2+) site. Residues asparagine 274 and 331-333 (GIM) each bind substrate.

Belongs to the succinate/malate CoA ligase beta subunit family. As to quaternary structure, heterotetramer of two alpha and two beta subunits. Mg(2+) serves as cofactor.

The enzyme catalyses succinate + ATP + CoA = succinyl-CoA + ADP + phosphate. It catalyses the reaction GTP + succinate + CoA = succinyl-CoA + GDP + phosphate. Its pathway is carbohydrate metabolism; tricarboxylic acid cycle; succinate from succinyl-CoA (ligase route): step 1/1. In terms of biological role, succinyl-CoA synthetase functions in the citric acid cycle (TCA), coupling the hydrolysis of succinyl-CoA to the synthesis of either ATP or GTP and thus represents the only step of substrate-level phosphorylation in the TCA. The beta subunit provides nucleotide specificity of the enzyme and binds the substrate succinate, while the binding sites for coenzyme A and phosphate are found in the alpha subunit. The sequence is that of Succinate--CoA ligase [ADP-forming] subunit beta from Bartonella henselae (strain ATCC 49882 / DSM 28221 / CCUG 30454 / Houston 1) (Rochalimaea henselae).